A 304-amino-acid polypeptide reads, in one-letter code: Proteasome subunit beta (304 aa).

Positions 1-65 (MTWPHFEQLA…LTPTDAVPHG (65 aa)) are cleaved as a propeptide — removed in mature form; by autocatalysis. T66 acts as the Nucleophile in catalysis.

The protein belongs to the peptidase T1B family. As to quaternary structure, the 20S proteasome core is composed of 14 alpha and 14 beta subunits that assemble into four stacked heptameric rings, resulting in a barrel-shaped structure. The two inner rings, each composed of seven catalytic beta subunits, are sandwiched by two outer rings, each composed of seven alpha subunits. The catalytic chamber with the active sites is on the inside of the barrel. Has a gated structure, the ends of the cylinder being occluded by the N-termini of the alpha-subunits. Is capped by the proteasome-associated ATPase, ARC.

Its subcellular location is the cytoplasm. The catalysed reaction is Cleavage of peptide bonds with very broad specificity.. The protein operates within protein degradation; proteasomal Pup-dependent pathway. With respect to regulation, the formation of the proteasomal ATPase ARC-20S proteasome complex, likely via the docking of the C-termini of ARC into the intersubunit pockets in the alpha-rings, may trigger opening of the gate for substrate entry. Interconversion between the open-gate and close-gate conformations leads to a dynamic regulation of the 20S proteasome proteolysis activity. Its function is as follows. Component of the proteasome core, a large protease complex with broad specificity involved in protein degradation. The sequence is that of Proteasome subunit beta from Mycobacterium sp. (strain JLS).